A 468-amino-acid chain; its full sequence is 6-phospho-beta-galactosidase (468 aa).

D-galactose 6-phosphate is bound by residues glutamine 19, histidine 116, asparagine 159, glutamate 160, and asparagine 297. The Proton donor role is filled by glutamate 160. Catalysis depends on glutamate 375, which acts as the Nucleophile. Serine 428, tryptophan 429, lysine 435, and tyrosine 437 together coordinate D-galactose 6-phosphate.

Belongs to the glycosyl hydrolase 1 family.

The catalysed reaction is a 6-phospho-beta-D-galactoside + H2O = D-galactose 6-phosphate + an alcohol. It participates in carbohydrate metabolism; lactose degradation; D-galactose 6-phosphate and beta-D-glucose from lactose 6-phosphate: step 1/1. This chain is 6-phospho-beta-galactosidase, found in Streptococcus pneumoniae (strain JJA).